The sequence spans 376 residues: Putative F-box only protein 9 (376 aa).

The F-box domain occupies 1 to 44; that stretch reads MSDLPPDLVEDILSRVPATSLKRLRFTCKQWNSLFKNRRFTEKH.

The sequence is that of Putative F-box only protein 9 (FBX9) from Arabidopsis thaliana (Mouse-ear cress).